The following is a 654-amino-acid chain: MSLAAYCVICCRRIGTSTSPPKSGTHWRDIRNIIKFTGSLILGGSLFLTYEVLALKKAVTLDTQVVEREKMKSYIYVHTVSLDKGENHGIAWQARKELHKAVRKVLATSAKILRNPFADPFSTVDIEDHECAVWLLLRKSKSDDKTTRLEAVREMSETHHWHDYQYRIIAQACDPKTLIGLARSEESDLRFFLLPPPLPSLKEDSSTEEELRQLLASLPQTELDECIQYFTSLALSESSQSLAAQKGGLWCFGGNGLPYAESFGEVPSATVEMFCLEAIVKHSEISTHCDKIEANGGLQLLQRLYRLHKDCPKVQRNIMRVIGNMALNEHLHSSIVRSGWVSIMAEAMKSPHIMESSHAARILANLDRETVQEKYQDGVYVLHPQYRTSQPIKADVLFIHGLMGAAFKTWRQQDSEQAVIEKPMEDEDRYTTCWPKTWLAKDCPALRIISVEYDTSLSDWRARCPMERKSIAFRSNELLRKLRAAGVGDRPVVWISHSMGGLLVKKMLLEASTKPEMSTVINNTRGIIFYSVPHHGSRLAEYSVNIRYLLFPSLEVKELSKDSPALKTLQDDFLEFAKDKNFQVLNFVETLPTYIGSMIKLHVVPVESADLGIGDLIPVDVNHLNICKPKKKDAFLYQRTLQFIREALAKDLEN.

Residues asparagine 32–alanine 54 traverse the membrane as a helical segment.

The protein belongs to the SERAC1 family. In terms of tissue distribution, widely expressed, with predominant expression in skeletal muscle and brain. In the brain, highest levels are found in the frontal and occipital cortices, cerebellum and hippocampus.

The protein resides in the mitochondrion membrane. The protein localises to the endoplasmic reticulum. Its subcellular location is the mitochondrion. Functionally, facilitates the transport of serine from the cytosol to the mitochondria by interacting with and stabilizing Sideroflexin-1 (SFXN1), a mitochondrial serine transporter, playing a fundamental role in the one-carbon cycle responsible for the synthesis of nucleotides needed for mitochondrial DNA replication. Plays an important role in the phosphatidylglycerol (PG) remodeling that is essential for both mitochondrial function and intracellular cholesterol trafficking. Specifically involved in the exchange of the sn-1 acyl chain from PG 16:0/18:1(9Z) (also known as 1-hexadecanoyl-2-(9Z-octadecenoyl)-sn-glycero-3-phospho-(1'-sn-glycerol)) to PG 18:0/18:1(9Z) (also known as 1-octadecanoyl-2-(9Z-octadecenoyl)-sn-glycero-3-phospho-(1'-sn-glycerol)), a step needed in the bis(monoacylglycerol)phosphate biosynthetic pathway. May have acyltransferase activity although the mechanism for PG remodeling has not been determined. This is Protein SERAC1 (SERAC1) from Homo sapiens (Human).